The primary structure comprises 408 residues: LL-diaminopimelate aminotransferase (408 aa).

Positions 15 and 42 each coordinate substrate. Pyridoxal 5'-phosphate contacts are provided by residues Tyr-72, 108 to 109 (SK), Tyr-132, Asn-187, Tyr-218, and 246 to 248 (SFS). Residues Lys-109, Tyr-132, and Asn-187 each coordinate substrate. Lys-249 is modified (N6-(pyridoxal phosphate)lysine). 2 residues coordinate pyridoxal 5'-phosphate: Arg-257 and Asn-292. Substrate is bound by residues Asn-292 and Arg-388.

This sequence belongs to the class-I pyridoxal-phosphate-dependent aminotransferase family. LL-diaminopimelate aminotransferase subfamily. In terms of assembly, homodimer. Pyridoxal 5'-phosphate serves as cofactor.

It carries out the reaction (2S,6S)-2,6-diaminopimelate + 2-oxoglutarate = (S)-2,3,4,5-tetrahydrodipicolinate + L-glutamate + H2O + H(+). The protein operates within amino-acid biosynthesis; L-lysine biosynthesis via DAP pathway; LL-2,6-diaminopimelate from (S)-tetrahydrodipicolinate (aminotransferase route): step 1/1. Involved in the synthesis of meso-diaminopimelate (m-DAP or DL-DAP), required for both lysine and peptidoglycan biosynthesis. Catalyzes the direct conversion of tetrahydrodipicolinate to LL-diaminopimelate. This Prochlorococcus marinus (strain MIT 9313) protein is LL-diaminopimelate aminotransferase.